A 444-amino-acid chain; its full sequence is Type VII secretion system protein EssB (444 aa).

Residues 1-229 (MVKNHNPKNE…RKVGHTVFKW (229 aa)) lie on the Cytoplasmic side of the membrane. Residues 230–250 (VAIGMTTLSVLLIAFLAFLYF) form a helical membrane-spanning segment. At 251–444 (SVMKHNERIE…EKRQEAERKK (194 aa)) the chain is on the extracellular side. Positions 366-444 (KNNGDLSNDK…EKRQEAERKK (79 aa)) are disordered. Residues 372 to 444 (SNDKRSEETK…EKRQEAERKK (73 aa)) show a composition bias toward basic and acidic residues. The stretch at 387–443 (LQDILDKEKQVKDEKAKSEEEKAKAKDEKLKQQEENEKKQKEQAQKDKEKRQEAERK) forms a coiled coil.

The protein belongs to the EssB family. As to quaternary structure, may oligomerize and interact with other membrane components to form the Ess system. Interacts with EsaA.

The protein localises to the cell membrane. Its function is as follows. Component of the type VII secretion system (Ess). Required for the secretion of EsxA and proper accumulation of EssB and EssD. The protein is Type VII secretion system protein EssB of Staphylococcus aureus (strain USA300).